A 341-amino-acid chain; its full sequence is DER1-like family member protein 1 (341 aa).

The Cytoplasmic segment spans residues 1 to 41; that stretch reads MAGPRNVRTLHGNGGRNNDVMGPKEFWLNIPPITRTLFTLA. Residues 42-62 form a helical membrane-spanning segment; sequence IVMTIVGRLNLINPWYFIYVW. At 63–122 the chain is on the lumenal side; it reads NLTFKKVQIWRLLTSCVMLSSRAMPALMELYSIYDRSSQLERGHFGPGLSNRRGPMVTVD. The helical transmembrane segment at 123 to 143 threads the bilayer; it reads YAYYLCFCILAITTATTIIYG. Residues 144–170 lie on the Cytoplasmic side of the membrane; it reads SYYPVVLTSGFISCITYTWSIDNANVQ. A helical membrane pass occupies residues 171 to 191; sequence IMFYGLIPVWGKYFPLIQLFI. A topological domain (lumenal) is located at residue S192. Residues 193–213 form a helical membrane-spanning segment; it reads FVFNEGDFVISLIGFTTGYLY. At 214 to 341 the chain is on the cytoplasmic side; the sequence is TCLDTHTLGP…GQTNSPSDSQ (128 aa). Composition is skewed to polar residues over residues 276-286 and 296-341; these read SSQRETRTFSG and ATLS…SDSQ. Positions 276–341 are disordered; the sequence is SSQRETRTFS…GQTNSPSDSQ (66 aa).

Belongs to the derlin family.

The protein resides in the endoplasmic reticulum membrane. May be involved in the degradation process of some misfolded endoplasmic reticulum (ER) luminal proteins. Its precise role is however unclear and its inability to complement der1 mutations, suggests either that it is not involved in degradation process of misfolded proteins, or that it participates in the destruction of specific misfolded ER luminal proteins. This Saccharomyces cerevisiae (strain ATCC 204508 / S288c) (Baker's yeast) protein is DER1-like family member protein 1 (DFM1).